The chain runs to 124 residues: UPF0292 protein AF_0905 (124 aa).

Positions 21-98 (GWVVVVEGKK…IPDVEIKRKI (78 aa)) constitute a Toprim domain. Glu27, Asp67, and Asp69 together coordinate Mg(2+).

Belongs to the UPF0292 family. Mg(2+) serves as cofactor.

The protein is UPF0292 protein AF_0905 of Archaeoglobus fulgidus (strain ATCC 49558 / DSM 4304 / JCM 9628 / NBRC 100126 / VC-16).